The sequence spans 404 residues: S-adenosylmethionine synthase (404 aa).

139 to 144 (GKGSSD) is an ATP binding site.

This sequence belongs to the AdoMet synthase 2 family. The cofactor is Mg(2+).

The catalysed reaction is L-methionine + ATP + H2O = S-adenosyl-L-methionine + phosphate + diphosphate. Its pathway is amino-acid biosynthesis; S-adenosyl-L-methionine biosynthesis; S-adenosyl-L-methionine from L-methionine: step 1/1. Its function is as follows. Catalyzes the formation of S-adenosylmethionine from methionine and ATP. The protein is S-adenosylmethionine synthase of Saccharolobus solfataricus (strain ATCC 35092 / DSM 1617 / JCM 11322 / P2) (Sulfolobus solfataricus).